A 455-amino-acid chain; its full sequence is Bifunctional protein GlmU (455 aa).

Residues Met1 to Arg226 form a pyrophosphorylase region. Residues Leu8–Gly11, Lys22, Gln73, Gly78–Thr79, Tyr99–Asp101, Gly136, Glu151, Asn166, and Asn224 each bind UDP-N-acetyl-alpha-D-glucosamine. Asp101 is a Mg(2+) binding site. Mg(2+) is bound at residue Asn224. The interval Lys227 to Gln247 is linker. The N-acetyltransferase stretch occupies residues Gly248–Asp455. The UDP-N-acetyl-alpha-D-glucosamine site is built by Arg330 and Lys348. The active-site Proton acceptor is the His360. The UDP-N-acetyl-alpha-D-glucosamine site is built by Tyr363 and Asn374. Residues Ala377, Asn383–Tyr384, Ser402, Ala420, and Arg437 contribute to the acetyl-CoA site.

This sequence in the N-terminal section; belongs to the N-acetylglucosamine-1-phosphate uridyltransferase family. In the C-terminal section; belongs to the transferase hexapeptide repeat family. As to quaternary structure, homotrimer. Mg(2+) serves as cofactor.

Its subcellular location is the cytoplasm. The enzyme catalyses alpha-D-glucosamine 1-phosphate + acetyl-CoA = N-acetyl-alpha-D-glucosamine 1-phosphate + CoA + H(+). It catalyses the reaction N-acetyl-alpha-D-glucosamine 1-phosphate + UTP + H(+) = UDP-N-acetyl-alpha-D-glucosamine + diphosphate. Its pathway is nucleotide-sugar biosynthesis; UDP-N-acetyl-alpha-D-glucosamine biosynthesis; N-acetyl-alpha-D-glucosamine 1-phosphate from alpha-D-glucosamine 6-phosphate (route II): step 2/2. The protein operates within nucleotide-sugar biosynthesis; UDP-N-acetyl-alpha-D-glucosamine biosynthesis; UDP-N-acetyl-alpha-D-glucosamine from N-acetyl-alpha-D-glucosamine 1-phosphate: step 1/1. It functions in the pathway bacterial outer membrane biogenesis; LPS lipid A biosynthesis. Functionally, catalyzes the last two sequential reactions in the de novo biosynthetic pathway for UDP-N-acetylglucosamine (UDP-GlcNAc). The C-terminal domain catalyzes the transfer of acetyl group from acetyl coenzyme A to glucosamine-1-phosphate (GlcN-1-P) to produce N-acetylglucosamine-1-phosphate (GlcNAc-1-P), which is converted into UDP-GlcNAc by the transfer of uridine 5-monophosphate (from uridine 5-triphosphate), a reaction catalyzed by the N-terminal domain. The sequence is that of Bifunctional protein GlmU from Pseudomonas fluorescens (strain ATCC BAA-477 / NRRL B-23932 / Pf-5).